The following is a 185-amino-acid chain: Ribosome-recycling factor (185 aa).

This sequence belongs to the RRF family.

The protein localises to the cytoplasm. Its function is as follows. Responsible for the release of ribosomes from messenger RNA at the termination of protein biosynthesis. May increase the efficiency of translation by recycling ribosomes from one round of translation to another. The protein is Ribosome-recycling factor of Streptococcus pyogenes serotype M28 (strain MGAS6180).